The sequence spans 212 residues: Probable GTP-binding protein EngB (212 aa).

Residues 27–211 form the EngB-type G domain; it reads GPPEIAFAGR…QAAIVLAANG (185 aa). GTP is bound by residues 35–42, 62–66, 89–92, 156–159, and 190–192; these read GRSNVGKS, GRTQE, DMPG, TKTD, and TSS. Mg(2+)-binding residues include S42 and T64.

It belongs to the TRAFAC class TrmE-Era-EngA-EngB-Septin-like GTPase superfamily. EngB GTPase family. Mg(2+) serves as cofactor.

Its function is as follows. Necessary for normal cell division and for the maintenance of normal septation. In Mesorhizobium japonicum (strain LMG 29417 / CECT 9101 / MAFF 303099) (Mesorhizobium loti (strain MAFF 303099)), this protein is Probable GTP-binding protein EngB.